Consider the following 733-residue polypeptide: MSDKKGEEITLRVAEAFYRDVGRGVARIDPAVMEKYGLQSGDIIEIIGKSTVPAIVWPSYPEDRGTGIIRIDGSIRSNAGVGIDDKVRIRKVTAKPAEKVTLAPTEPVRLMGGEAYLLRLLEGRPVIKGQKIRVEVFGHTLTFVITATRPSGVVVVTRNTAIELKEKPAEEVKRAVPDVTYEDIGGLKRELRLVREMIELPLKHPELFQRLGIEPPKGVLLYGPPGTGKTLIAKAVANEVDAHFIPISGPEIMSKYYGESEQRLREIFEEAKENAPSIIFIDEIDSIAPKREEVTGEVERRVVAQLLALMDGLEARGDVIVIAATNRPDAIDPALRRPGRFDREIEIGVPDKEGRKEILEIHTRKMPLAEDVDLEELAELTNGFVGADLEALCKEAAMHALRRVLPEIDIEAEEIPAEVIENLKVTREDFMEALKNIEPSAMREVLVEVPNVKWEDIGGLEHAKQELMEAVEWPLKYPEVFRAANIKPPRGILLFGPPGTGKTLLAKAVANESNANFISVKGPELLSKWVGESEKHVREMFRKARQVAPCVIFFDEIDSLAPRRGGIGDSHVTERVVSQLLTELDGLEELKDVVVIAATNRPDMIDPALLRPGRLERHIYIPPPDKKARVEIFKIHLRGKPLADDVNIEELAEKTEGYSGADIEAVCREAGMLAIRELIKPGMTREEAKEAAKKLKITKKHFEEALKKVRPSLTKEDVEKYEKLIEDFHRMYA.

Residues 223–230 and 496–503 each bind ATP; these read GPPGTGKT.

This sequence belongs to the AAA ATPase family. CDC48 subfamily.

The chain is Cell division cycle protein 48 homolog AF_1297 from Archaeoglobus fulgidus (strain ATCC 49558 / DSM 4304 / JCM 9628 / NBRC 100126 / VC-16).